The chain runs to 411 residues: Nuclear receptor subfamily 2 group F member 1-A (411 aa).

Positions 1-68 (MAMVVSVWRD…AGDKGSQNSG (68 aa)) are disordered. Over residues 24–46 (NPAAQPAREQQQAASAAPHTPQT) the composition is skewed to low complexity. Positions 73–148 (HIECVVCGDK…VGMRREAVQR (76 aa)) form a DNA-binding region, nuclear receptor. 2 consecutive NR C4-type zinc fingers follow at residues 76–96 (CVVC…CEGC) and 112–136 (CRAN…LKKC). The NR LBD domain maps to 174–400 (YLSGYISLLL…TLIRDMLLSG (227 aa)).

It belongs to the nuclear hormone receptor family. NR2 subfamily. As to expression, first expressed in 11-12 hour embryos. In the rostral brain of 13 hour embryos, expressed within the anterior half of the midbrain and the posterior part of the diencephalon. In the presumptive hindbrain, expressed in a segment-like stripe in the anterior region, resembling the presumptive rhombomere units of the hindbrain. Also detected in the intermediate mesoderm, posterior to the first somite. As somitogenesis proceeds, expression extends posteriorly and flanks the 10 most anterior somites. Expression changes extensively both in level and expansion of domains between 13 and 20 hours. In the rostral brain, expression extends to include a major part of the diencephalon and a caudal portion of the telencephalon. Within the hindbrain, strongly expressed in the two most anterior rhombomeres, and a lower but uniform expression is seen to extend throughout rhombomere 7. In 28 hour embryos, higher and more uniform expression is seen in both rostral and hindbrain areas. Also expressed in the retina of the eye.

It is found in the nucleus. In terms of biological role, putative transcription factor that is required in photoreceptor cells precursors during eye development. The protein is Nuclear receptor subfamily 2 group F member 1-A (nr2f1a) of Danio rerio (Zebrafish).